A 64-amino-acid chain; its full sequence is Basic secretory protease (64 aa).

Requires a divalent metal cation as cofactor. Post-translationally, glycosylated.

Inhibited by EDTA. In terms of biological role, metalloprotease, digests gelatin and azocasein (in vitro). This chain is Basic secretory protease, found in Boswellia serrata (Indian frankincense).